Reading from the N-terminus, the 109-residue chain is Large ribosomal subunit protein uL22 (109 aa).

This sequence belongs to the universal ribosomal protein uL22 family. As to quaternary structure, part of the 50S ribosomal subunit.

Functionally, this protein binds specifically to 23S rRNA; its binding is stimulated by other ribosomal proteins, e.g. L4, L17, and L20. It is important during the early stages of 50S assembly. It makes multiple contacts with different domains of the 23S rRNA in the assembled 50S subunit and ribosome. The globular domain of the protein is located near the polypeptide exit tunnel on the outside of the subunit, while an extended beta-hairpin is found that lines the wall of the exit tunnel in the center of the 70S ribosome. This chain is Large ribosomal subunit protein uL22, found in Polynucleobacter asymbioticus (strain DSM 18221 / CIP 109841 / QLW-P1DMWA-1) (Polynucleobacter necessarius subsp. asymbioticus).